A 216-amino-acid chain; its full sequence is Ras-related protein RABE1a (216 aa).

G22–S29 lines the GTP pocket. Residues F44 to F52 carry the Effector region motif. GTP contacts are provided by residues D70–Q74, N128–D131, and S159–A160. The segment at D185–T216 is disordered. The segment covering I193 to T216 has biased composition (polar residues). 2 S-geranylgeranyl cysteine lipidation sites follow: C213 and C214.

The protein belongs to the small GTPase superfamily. Rab family. As to quaternary structure, interacts with PI5K2.

Its subcellular location is the golgi apparatus membrane. The protein resides in the cell membrane. Its function is as follows. Involved in membrane trafficking from the Golgi to the plasma membrane. This is Ras-related protein RABE1a (RABE1A) from Arabidopsis thaliana (Mouse-ear cress).